Consider the following 404-residue polypeptide: FKFRQSPSSPRFRLNSRNWALNVTTPLTVDSSSSPPIEEEPKTQRFDPGAPPPFNLADIRAAIPKHCWVKNPWKSMSYVVRELAIVFALAAGAAYLNNWLVWPLYWIAQGTMFWALFVLGHDCGHGSFSNDPRLNSVVGHLLHSSILVPYHGWRISHRTHHQNHGHVENDESWHPMSEKIYKSLDKPTRFFRFTLPLVMLAYPFYLWARSPGKKGSHYHPDSDLFLPKERNDVLTSTACWTAMAVLLVCLNFVMGPMQMLKLYVIPYWINVMWLDFVTYLHHHGHEDKLPWYRGKEWSYLRGGLTTLDRDYGLINNIHHDIGTHVIHHLFPQIPHYHLVEATEAAKPVLGKYYREPDKSGPLPLHLLGILAKSIKEDHFVSDEGDVVYYEADPNLYGEIKVTAE.

Positions 28–50 (TVDSSSSPPIEEEPKTQRFDPGA) are disordered. A Histidine box-1 motif is present at residues 121-125 (HDCGH). The short motif at 157–161 (HRTHH) is the Histidine box-2 element. Positions 324–328 (HVIHH) match the Histidine box-3 motif.

Belongs to the fatty acid desaturase type 1 family.

The protein localises to the plastid. It localises to the chloroplast membrane. It functions in the pathway lipid metabolism; polyunsaturated fatty acid biosynthesis. Chloroplast omega-3 fatty acid desaturase introduces the third double bond in the biosynthesis of 16:3 and 18:3 fatty acids, important constituents of plant membranes. It is thought to use ferredoxin as an electron donor and to act on fatty acids esterified to galactolipids, sulfolipids and phosphatidylglycerol. In Brassica napus (Rape), this protein is Omega-3 fatty acid desaturase, chloroplastic (FAD7).